Consider the following 568-residue polypeptide: Putative U-box domain-containing protein 55 (568 aa).

Residues 217–464 are a coiled coil; it reads QSESDRNDQL…KVAAEKDAAS (248 aa). The 73-residue stretch at 496-568 folds into the U-box domain; the sequence is QPPSYFICPI…AIQEWLQRNS (73 aa).

It carries out the reaction S-ubiquitinyl-[E2 ubiquitin-conjugating enzyme]-L-cysteine + [acceptor protein]-L-lysine = [E2 ubiquitin-conjugating enzyme]-L-cysteine + N(6)-ubiquitinyl-[acceptor protein]-L-lysine.. The protein operates within protein modification; protein ubiquitination. Functionally, functions as an E3 ubiquitin ligase. This Arabidopsis thaliana (Mouse-ear cress) protein is Putative U-box domain-containing protein 55 (PUB55).